The following is a 660-amino-acid chain: uncharacterized protein (660 aa).

Residues 1–660 (MGTPCQSARG…RNPGCPRTWR (660 aa)) are disordered. Residues 67–80 (RPGGGNRVGAGRGR) are compositionally biased toward gly residues. A compositionally biased stretch (polar residues) spans 104-116 (SNPTGGCSDPQRS). 4 tandem repeats follow at residues 149 to 273 (SARN…GCPR), 274 to 398 (SARN…GCPR), 399 to 523 (SARN…GCPR), and 524 to 648 (SARN…GCPR). The tract at residues 149-648 (SARNPGCPRT…THRRPPGCPR (500 aa)) is 4 X 125 AA tandem repeats. 4 stretches are compositionally biased toward low complexity: residues 177 to 196 (RPSG…GTPA), 302 to 321 (RPSG…GTPA), 427 to 446 (RPSG…GTPA), and 552 to 571 (RPSG…GTPA).

This is an uncharacterized protein from Homo sapiens (Human).